Reading from the N-terminus, the 203-residue chain is Probable GTP-binding protein EngB (203 aa).

An EngB-type G domain is found at 24 to 199 (DGSEVAFAGR…HTVIETWLGL (176 aa)). GTP contacts are provided by residues 32–39 (GRSNAGKS), 59–63 (GRTQQ), 77–80 (DLPG), 144–147 (TKAD), and 178–180 (FSS). Mg(2+) contacts are provided by serine 39 and threonine 61.

It belongs to the TRAFAC class TrmE-Era-EngA-EngB-Septin-like GTPase superfamily. EngB GTPase family. Requires Mg(2+) as cofactor.

In terms of biological role, necessary for normal cell division and for the maintenance of normal septation. The protein is Probable GTP-binding protein EngB of Xylella fastidiosa (strain Temecula1 / ATCC 700964).